We begin with the raw amino-acid sequence, 219 residues long: Small ribosomal subunit protein uS3c (219 aa).

The KH type-2 domain occupies Ile-43–Glu-118.

Belongs to the universal ribosomal protein uS3 family. Part of the 30S ribosomal subunit.

It localises to the plastid. The chain is Small ribosomal subunit protein uS3c (rps3) from Cuscuta exaltata (Tall dodder).